A 306-amino-acid chain; its full sequence is Curved DNA-binding protein (306 aa).

One can recognise a J domain in the interval Asp5–Trp69.

The protein localises to the cytoplasm. The protein resides in the nucleoid. Its function is as follows. DNA-binding protein that preferentially recognizes a curved DNA sequence. It is probably a functional analog of DnaJ; displays overlapping activities with DnaJ, but functions under different conditions, probably acting as a molecular chaperone in an adaptive response to environmental stresses other than heat shock. Lacks autonomous chaperone activity; binds native substrates and targets them for recognition by DnaK. Its activity is inhibited by the binding of CbpM. The protein is Curved DNA-binding protein of Shigella sonnei (strain Ss046).